A 316-amino-acid chain; its full sequence is Ribosomal RNA small subunit methyltransferase H (316 aa).

Residues 35 to 37, Asp-55, Phe-84, Asp-105, and Gln-112 contribute to the S-adenosyl-L-methionine site; that span reads SGH.

It belongs to the methyltransferase superfamily. RsmH family.

The protein resides in the cytoplasm. The enzyme catalyses cytidine(1402) in 16S rRNA + S-adenosyl-L-methionine = N(4)-methylcytidine(1402) in 16S rRNA + S-adenosyl-L-homocysteine + H(+). In terms of biological role, specifically methylates the N4 position of cytidine in position 1402 (C1402) of 16S rRNA. The polypeptide is Ribosomal RNA small subunit methyltransferase H (Streptococcus pyogenes serotype M6 (strain ATCC BAA-946 / MGAS10394)).